The chain runs to 1170 residues: DNA excision repair protein ERCC-5 (1170 aa).

The segment at 1–78 (MGVQGLWKLL…RIRPIFVFDG (78 aa)) is N-domain. N6-acetyllysine is present on Lys8. Residue Asp30 coordinates Mg(2+). Residues 31-67 (ISIWLNQALKGVRDSHGNVIENAHLLTLFHRLCKLLF) form a DNA-binding; may bind to the undamaged single-strand DNA of the DNA repair bubble region. Asp77 is a Mg(2+) binding site. The interval 79 to 784 (DAPLLKKQTL…LRLFGVPYIQ (706 aa)) is spacer region. Disordered stretches follow at residues 304-479 (DSES…RCDT), 520-587 (HVSG…PKAC), and 600-701 (LENA…ECLL). The segment covering 306–323 (ESLPSSSNVHSVSSNLKS) has biased composition (low complexity). Basic and acidic residues-rich tracts occupy residues 324 to 336 (SPHE…REPE) and 363 to 373 (SREGRQSKERN). Ser384 carries the post-translational modification Phosphoserine. The segment covering 455-474 (TSGSSANGQTDSAHSFTTAS) has biased composition (polar residues). The span at 539–551 (THSDQGIDIHPED) shows a compositional bias: basic and acidic residues. Over residues 659-676 (SVVSNSELQTESSEASTH) the composition is skewed to polar residues. Residues 677 to 698 (LSEKDAEEPRETLEEGTSRDTE) are compositionally biased toward basic and acidic residues. Phosphoserine is present on residues Ser704 and Ser705. Residues 785-880 (APMEAEAQCA…VTAMEILNEF (96 aa)) are I-domain. Mg(2+)-binding residues include Glu788, Glu790, Asp809, and Asp811. The interval 819 to 835 (HVYKNFFNKNKFVEYYQ) is DNA-binding; may bind to the undamaged single-strand DNA of the DNA repair bubble. A DNA-binding; H2TH (helix-2turn-helix) motif which binds double-stranded DNA region spans residues 847-879 (RNKLINLAYLLGSDYTEGIPTVGCVTAMEILNE). Asp860 provides a ligand contact to Mg(2+). The DNA-binding; may bind double-stranded DNA stretch occupies residues 911-917 (TKVKKKL). The interval 980 to 1008 (LKHLNAHQTQLRIDSFFRLAQQEKQDAKL) is interaction with PCNA. Residues 1010 to 1170 (KSHRLNRAVT…KSMKRRKKKT (161 aa)) form an interaction with ERCC6/CSB region. The segment at 1033-1146 (LTKVTEALDD…DDEDKAKTVL (114 aa)) is disordered. Residues 1041–1060 (DDAKGKTQKRELPYKKETSV) are compositionally biased toward basic and acidic residues. The short motif at 1049–1065 (KRELPYKKETSVPKRRR) is the Nuclear localization signal 1 element. Polar residues predominate over residues 1094–1110 (SVMSARQRSAAESSKIS). Residues 1153–1170 (FGKKKLKLKSMKRRKKKT) carry the Nuclear localization signal 2 motif.

It belongs to the XPG/RAD2 endonuclease family. XPG subfamily. In terms of assembly, monomer. Homodimer. Component of the homologous recombination repair (HR) complex composed of ERCC5/XPG, BRCA2, PALB2, DSS1 and RAD51. Within the complex, interacts with BRCA2 and PALB2. Interacts with RNA polymerase II. Interacts (via C-terminus) with ERCC6/CSB; the interaction stimulates ERCC6/CSB binding to the DNA repair bubble and ERCC6/CSB ATPase activity. May form a complex composed of RNA polymerase II, ERCC6/CSB and ERCC5/XPG which associates with the DNA repair bubble during transcription-coupled nucleotide excision repair. Interacts with BRCA1; the interaction promotes the release of BRCA1 from DNA. Interacts with PCNA. Interacts with NTHL1; the interaction stimulates NTHL1 activity and NTHL1 binding to its DNA substrate. Mg(2+) serves as cofactor.

The protein localises to the nucleus. Its subcellular location is the chromosome. Functionally, single-stranded structure-specific DNA endonuclease involved in DNA excision repair. Makes the 3'incision in DNA nucleotide excision repair (NER). Binds and bends DNA repair bubble substrate and breaks base stacking at the single-strand/double-strand DNA junction of the DNA bubble. Plays a role in base excision repair (BER) by promoting the binding of DNA glycosylase NTHL1 to its substrate and increasing NTHL1 catalytic activity that removes oxidized pyrimidines from DNA. Involved in transcription-coupled nucleotide excision repair (TCR) which allows RNA polymerase II-blocking lesions to be rapidly removed from the transcribed strand of active genes. Functions during the initial step of TCR in cooperation with ERCC6/CSB to recognized stalled RNA polymerase II. Also, stimulates ERCC6/CSB binding to the DNA repair bubble and ERCC6/CSB ATPase activity. Required for DNA replication fork maintenance and preservation of genomic stability. Involved in homologous recombination repair (HRR) induced by DNA replication stress by recruiting RAD51, BRCA2, and PALB2 to the damaged DNA site. During HRR, binds to the replication fork with high specificity and stabilizes it. Also, acts upstream of HRR, to promote the release of BRCA1 from DNA. The protein is DNA excision repair protein ERCC-5 (Ercc5) of Mus musculus (Mouse).